A 383-amino-acid polypeptide reads, in one-letter code: tRNA(Met) cytidine acetate ligase (383 aa).

Residues 7–20 (IAEF…HEFL), glycine 101, asparagine 153, and 178–179 (RI) contribute to the ATP site.

This sequence belongs to the TmcAL family.

The protein localises to the cytoplasm. The enzyme catalyses cytidine(34) in elongator tRNA(Met) + acetate + ATP = N(4)-acetylcytidine(34) in elongator tRNA(Met) + AMP + diphosphate. In terms of biological role, catalyzes the formation of N(4)-acetylcytidine (ac(4)C) at the wobble position of elongator tRNA(Met), using acetate and ATP as substrates. First activates an acetate ion to form acetyladenylate (Ac-AMP) and then transfers the acetyl group to tRNA to form ac(4)C34. This is tRNA(Met) cytidine acetate ligase from Lactobacillus acidophilus (strain ATCC 700396 / NCK56 / N2 / NCFM).